Consider the following 311-residue polypeptide: Probable deoxyhypusine synthase (311 aa).

K284 serves as the catalytic Nucleophile.

This sequence belongs to the deoxyhypusine synthase family. It depends on NAD(+) as a cofactor.

The catalysed reaction is [eIF5A protein]-L-lysine + spermidine = [eIF5A protein]-deoxyhypusine + propane-1,3-diamine. Its pathway is protein modification; eIF5A hypusination. Its function is as follows. Catalyzes the NAD-dependent oxidative cleavage of spermidine and the subsequent transfer of the butylamine moiety of spermidine to the epsilon-amino group of a specific lysine residue of the eIF-5A precursor protein to form the intermediate deoxyhypusine residue. This chain is Probable deoxyhypusine synthase, found in Sulfolobus acidocaldarius (strain ATCC 33909 / DSM 639 / JCM 8929 / NBRC 15157 / NCIMB 11770).